The primary structure comprises 457 residues: tRNA modification GTPase MnmE (457 aa).

The (6S)-5-formyl-5,6,7,8-tetrahydrofolate site is built by R24, E81, and K121. The TrmE-type G domain maps to 218–380 (GIKIVITGKP…LLKYLTKIIS (163 aa)). A K(+)-binding site is contributed by N228. GTP contacts are provided by residues 228–233 (NVGKSS), 247–253 (TNIAGTT), 272–275 (DTAG), and 338–341 (NKAD). S232 is a binding site for Mg(2+). K(+)-binding residues include T247, I249, and T252. Mg(2+) is bound at residue T253. K457 contacts (6S)-5-formyl-5,6,7,8-tetrahydrofolate.

This sequence belongs to the TRAFAC class TrmE-Era-EngA-EngB-Septin-like GTPase superfamily. TrmE GTPase family. In terms of assembly, homodimer. Heterotetramer of two MnmE and two MnmG subunits. K(+) is required as a cofactor.

It localises to the cytoplasm. Its function is as follows. Exhibits a very high intrinsic GTPase hydrolysis rate. Involved in the addition of a carboxymethylaminomethyl (cmnm) group at the wobble position (U34) of certain tRNAs, forming tRNA-cmnm(5)s(2)U34. This is tRNA modification GTPase MnmE from Baumannia cicadellinicola subsp. Homalodisca coagulata.